A 2216-amino-acid chain; its full sequence is Protein Ycf2 (2216 aa).

1567-1574 (GSIGTGRS) is an ATP binding site.

The protein belongs to the Ycf2 family.

It localises to the plastid stroma. Functionally, probable ATPase of unknown function. Its presence in a non-photosynthetic plant (Epifagus virginiana) and experiments in tobacco indicate that it has an essential function which is probably not related to photosynthesis. This is Protein Ycf2 from Epifagus virginiana (Beechdrops).